Here is a 356-residue protein sequence, read N- to C-terminus: MADAAVIEKLEAGFKKLEAATDCKSLLKKYLSKAVFDQLKEKKTSLGATLLDVIQSGVENLDSGVGIYAPDAEAYTLFSPLFDPIIEDYHVGFKQTDKHPNKDFGDVNTFVNVDPEGKYVISTRVRCGRSMEGYPFNPCLTEAQYKEMEAKVSSTLSSLEGELKGTYYPLTGMSKEVQQKLIDDHFLFKEGDRFLQAANACRYWPAGRGIYHNDNKTFLVWVNEEDHLRIISMQMGGDLGQVFRRLTSAVNEIEKRIPFSHHDRLGFLTFCPTNLGTTVRASVHIKLPKLAANREKLEEVAGKYNLQVRGTRGEHTEAEGGIYDISNKRRMGLTEFQAVKEMQDGILELIKMEKEM.

Position 2 is an N-acetylalanine (A2). Residues 9–91 form the Phosphagen kinase N-terminal domain; the sequence is KLEAGFKKLE…FDPIIEDYHV (83 aa). Residue 64–68 coordinates L-arginine; it reads GVGIY. One can recognise a Phosphagen kinase C-terminal domain in the interval 119-356; sequence YVISTRVRCG…LELIKMEKEM (238 aa). ATP is bound by residues 122–126 and H185; that span reads STRVR. E225 serves as a coordination point for L-arginine. Position 229 (R229) interacts with ATP. C271 is a binding site for L-arginine. Residues 280-284 and 309-314 each bind ATP; these read RASVH and RGTRGE. E314 provides a ligand contact to L-arginine.

Belongs to the ATP:guanido phosphotransferase family.

The enzyme catalyses L-arginine + ATP = N(omega)-phospho-L-arginine + ADP + H(+). The chain is Arginine kinase from Penaeus monodon (Giant tiger prawn).